A 261-amino-acid chain; its full sequence is Guanine nucleotide exchange factor BopE (261 aa).

Over residues 241 to 253 the composition is skewed to basic and acidic residues; sequence RRAAQDASRDEKG. Residues 241 to 261 are disordered; sequence RRAAQDASRDEKGAANAADGA.

This sequence belongs to the GEF (guanine exchange factor) SopE family. Monomer. Interacts with human CDC42.

It is found in the secreted. Activator for both CDC42 and RAC1 by directly interacting with these Rho GTPases and acting as a guanine nucleotide exchange factor (GEF). This activation results in actin cytoskeleton rearrangements and stimulates membrane ruffling, thus promoting bacterial entry into non-phagocytic cells. The protein is Guanine nucleotide exchange factor BopE (bopE) of Burkholderia thailandensis (strain ATCC 700388 / DSM 13276 / CCUG 48851 / CIP 106301 / E264).